The chain runs to 408 residues: Peptidase T (408 aa).

His-78 serves as a coordination point for Zn(2+). Asp-80 is an active-site residue. Asp-141 contributes to the Zn(2+) binding site. Catalysis depends on Glu-175, which acts as the Proton acceptor. Positions 176, 198, and 380 each coordinate Zn(2+).

The protein belongs to the peptidase M20B family. The cofactor is Zn(2+).

It localises to the cytoplasm. It catalyses the reaction Release of the N-terminal residue from a tripeptide.. In terms of biological role, cleaves the N-terminal amino acid of tripeptides. The polypeptide is Peptidase T (Clostridium botulinum (strain Okra / Type B1)).